The sequence spans 307 residues: N-acetylmuramic acid 6-phosphate etherase (307 aa).

An SIS domain is found at I62–K225. Catalysis depends on E90, which acts as the Proton donor. Residue E121 is part of the active site.

Belongs to the GCKR-like family. MurNAc-6-P etherase subfamily. Homodimer.

The catalysed reaction is N-acetyl-D-muramate 6-phosphate + H2O = N-acetyl-D-glucosamine 6-phosphate + (R)-lactate. Its pathway is amino-sugar metabolism; 1,6-anhydro-N-acetylmuramate degradation. The protein operates within amino-sugar metabolism; N-acetylmuramate degradation. It participates in cell wall biogenesis; peptidoglycan recycling. Its function is as follows. Specifically catalyzes the cleavage of the D-lactyl ether substituent of MurNAc 6-phosphate, producing GlcNAc 6-phosphate and D-lactate. Together with AnmK, is also required for the utilization of anhydro-N-acetylmuramic acid (anhMurNAc) either imported from the medium or derived from its own cell wall murein, and thus plays a role in cell wall recycling. In Pseudoalteromonas atlantica (strain T6c / ATCC BAA-1087), this protein is N-acetylmuramic acid 6-phosphate etherase.